The following is a 1663-amino-acid chain: Cortactin-binding protein 2 (1663 aa).

Disordered regions lie at residues Met1 to Ala26, Lys203 to Ala225, Gln359 to Gly440, Gly454 to Ser478, and Ser497 to Pro615. Residues Arg119–Lys276 adopt a coiled-coil conformation. 2 stretches are compositionally biased toward polar residues: residues Gly385 to Asn396 and Gln418 to Ala435. Arg498 bears the Asymmetric dimethylarginine mark. Residues Pro606–Pro615 are compositionally biased toward pro residues. 6 ANK repeats span residues Gly709–Tyr739, Asp743–Ala772, Asn776–His805, Gly809–Val838, Asp842–Gly871, and Glu912–Arg942. The segment at Lys1449–Ser1490 is disordered. Residue Ser1524 is modified to Phosphoserine. A disordered region spans residues Val1579 to Lys1663. The span at Pro1586–Cys1595 shows a compositional bias: polar residues. Low complexity predominate over residues Ser1624–Gln1638. Residues Ser1645–Lys1663 show a composition bias toward basic and acidic residues.

As to quaternary structure, interacts with CTTN/cortactin SH3 domain. Interacts with STRN, STRN4/zinedin and MOB4/phocein; this interactions mediate the association with the STRIPAK core complex and may regulate dendritic spine distribution of the STRIPAK complex in hippocampal neurons. Activation of glutamate receptors weakens the interaction with STRN and STRN4.

It is found in the cytoplasm. It localises to the cell cortex. Its subcellular location is the cell projection. The protein localises to the dendritic spine. Functionally, regulates the dendritic spine distribution of CTTN/cortactin in hippocampal neurons, and thus controls dendritic spinogenesis and dendritic spine maintenance. Associates with the striatin-interacting phosphatase and kinase (STRIPAK) core complex to regulate dendritic spine distribution of the STRIPAK complex in hippocampal neurons. This is Cortactin-binding protein 2 (CTTNBP2) from Rhinolophus ferrumequinum (Greater horseshoe bat).